A 212-amino-acid chain; its full sequence is Large ribosomal subunit protein uL3 (212 aa).

At Q153 the chain carries N5-methylglutamine.

Belongs to the universal ribosomal protein uL3 family. Part of the 50S ribosomal subunit. Forms a cluster with proteins L14 and L19. Post-translationally, methylated by PrmB.

One of the primary rRNA binding proteins, it binds directly near the 3'-end of the 23S rRNA, where it nucleates assembly of the 50S subunit. The polypeptide is Large ribosomal subunit protein uL3 (Azoarcus sp. (strain BH72)).